The primary structure comprises 662 residues: UvrABC system protein B (662 aa).

The Helicase ATP-binding domain occupies 31-188 (DNIEGGEKAQ…NDLVDIQFER (158 aa)). 44-51 (GATGTGKT) provides a ligand contact to ATP. The Beta-hairpin motif lies at 97–120 (YYDYYQPEAYVPSSDTYIEKDSSV). The Helicase C-terminal domain occupies 435 to 601 (QIDDLLGEIN…TIKKEIRDLI (167 aa)). The region spanning 626-661 (KELVKKLEKQMQEAVEVLDFELAAQIRDMMLEVKAL) is the UVR domain.

This sequence belongs to the UvrB family. In terms of assembly, forms a heterotetramer with UvrA during the search for lesions. Interacts with UvrC in an incision complex.

The protein localises to the cytoplasm. In terms of biological role, the UvrABC repair system catalyzes the recognition and processing of DNA lesions. A damage recognition complex composed of 2 UvrA and 2 UvrB subunits scans DNA for abnormalities. Upon binding of the UvrA(2)B(2) complex to a putative damaged site, the DNA wraps around one UvrB monomer. DNA wrap is dependent on ATP binding by UvrB and probably causes local melting of the DNA helix, facilitating insertion of UvrB beta-hairpin between the DNA strands. Then UvrB probes one DNA strand for the presence of a lesion. If a lesion is found the UvrA subunits dissociate and the UvrB-DNA preincision complex is formed. This complex is subsequently bound by UvrC and the second UvrB is released. If no lesion is found, the DNA wraps around the other UvrB subunit that will check the other stand for damage. This Streptococcus pneumoniae (strain P1031) protein is UvrABC system protein B.